A 261-amino-acid polypeptide reads, in one-letter code: Kallikrein 1-related peptidase b21 (261 aa).

The first 17 residues, 1–17 (MRFLILFLALSLGEIDA), serve as a signal peptide directing secretion. Positions 18–24 (APPVQSR) are cleaved as a propeptide — activation peptide. Residues 25–258 (IVGGFNCEKN…FTSWIKDTMA (234 aa)) form the Peptidase S1 domain. 5 disulfides stabilise this stretch: C31-C173, C50-C66, C152-C219, C184-C198, and C209-C234. H65 acts as the Charge relay system in catalysis. N102 carries N-linked (GlcNAc...) asparagine glycosylation. The active-site Charge relay system is the D120. S213 acts as the Charge relay system in catalysis.

This sequence belongs to the peptidase S1 family. Kallikrein subfamily. Expressed in testis and submaxillary gland. In the testis, expression localized specifically to Leydig cells in the interstitial tissues.

The catalysed reaction is Preferential cleavage of Arg-|-Xaa bonds in small molecule substrates. Highly selective action to release kallidin (lysyl-bradykinin) from kininogen involves hydrolysis of Met-|-Xaa or Leu-|-Xaa.. With respect to regulation, inhibited by protease inhibitors diisopropylfluorophosphate, leupeptin, antipain, benzamidine, phenylmethylsulfonyl fluoride and soybean trypsin inhibitor. Glandular kallikreins cleave Met-Lys and Arg-Ser bonds in kininogen to release Lys-bradykinin. Displays trypsin-like substrate specificity and shows activity towards casein, gelatin, fibronectin and IGFBP3. This is Kallikrein 1-related peptidase b21 (Klk1b21) from Mus musculus (Mouse).